Reading from the N-terminus, the 467-residue chain is 5-phosphohydroxy-L-lysine phospho-lyase (467 aa).

K278 bears the N6-(pyridoxal phosphate)lysine mark.

This sequence belongs to the class-III pyridoxal-phosphate-dependent aminotransferase family. In terms of assembly, homotetramer. The cofactor is pyridoxal 5'-phosphate.

It is found in the mitochondrion. The catalysed reaction is (5R)-5-phosphooxy-L-lysine + H2O = (S)-2-amino-6-oxohexanoate + NH4(+) + phosphate. Functionally, catalyzes the pyridoxal-phosphate-dependent breakdown of 5-phosphohydroxy-L-lysine, converting it to ammonia, inorganic phosphate and 2-aminoadipate semialdehyde. The chain is 5-phosphohydroxy-L-lysine phospho-lyase (Phykpl) from Mus musculus (Mouse).